Here is a 357-residue protein sequence, read N- to C-terminus: Protein BMRF2 (357 aa).

The Virion surface portion of the chain corresponds to 1–11 (MFSCKQHLSLG). Residues 12-32 (ACVFCLGLLASTPFIWCFVFA) are membrane-embedded. Over 33–46 (NLLSLEIFSPWQTH) the chain is Virion surface. At 47-67 (VYRLGFPTACLMAVLWTLVPA) the chain is embedded in the membrane. Residues 68 to 70 (KHA) lie on the Virion surface side of the membrane. Residues 71 to 91 (VRAVTPAIMLNIASALIFFSL) are membrane-embedded. At 92-98 (RVYSTST) the chain is on the virion surface side. Positions 99–121 (WVSAPCLFLANLPLLCLWPRLAI) form a transmembrane segment. Residues 122 to 133 (EIVYICPAIHQR) lie on the Virion surface side of the membrane. At 134–154 (FFELGLLLACTIFALSVVSRA) the chain is embedded in the membrane. The Virion surface portion of the chain corresponds to 155 to 158 (LEVS). Over 159–179 (AVFMSPFFIFLALGSGSLAGA) the chain traverses the membrane. The Virion surface portion of the chain corresponds to 180–217 (RRNQIYTSGLERRRSIFCARGDHSVASLKETLHKCPWD). The Integrin binding site signature appears at 199–201 (RGD). The chain crosses the lipid bilayer at residues 218 to 238 (LLAISALTVLVVCVMIVLHVH). Topologically, residues 239-240 (AE) are virion surface. Over 241–261 (VFFGLSRYLPLFLCGAMASGG) the chain traverses the membrane. Topologically, residues 262-267 (LYLGHS) are virion surface. Over 268 to 288 (SIIACVMATLCTLTSVVVYFL) the chain traverses the membrane. Residues 289–298 (HETLGPLGKT) lie on the Virion surface side of the membrane. At 299–319 (VLFISIFVYYFSGVAALSAAM) the chain is embedded in the membrane. At 320-335 (RYKLKKFVNGPLVHLR) the chain is on the virion surface side. At 336–356 (VVYMCCFVFTFCEYLLVTFIK) the chain is embedded in the membrane. S357 is a topological domain (virion surface).

The protein belongs to the herpesviridae BMRF2 family. In terms of assembly, interacts with BDLF2. Interacts with host beta1 integrin family. In terms of processing, extensively glycosylated by O-linked oligosaccharides.

It is found in the virion membrane. It localises to the host cell membrane. Functionally, facilitates virus attachment to oral epithelial cells by binding to host beta1 integrin family. Participates in rearrangement of cellular actin to increase intercellular contacts by binding BDLF2 and thereby promote virus cell-to-cell spreading. The sequence is that of Protein BMRF2 from Homo sapiens (Human).